The sequence spans 344 residues: Ferrochelatase (344 aa).

The Fe cation site is built by His214 and Glu295.

The protein belongs to the ferrochelatase family.

It localises to the cytoplasm. It carries out the reaction heme b + 2 H(+) = protoporphyrin IX + Fe(2+). The protein operates within porphyrin-containing compound metabolism; protoheme biosynthesis; protoheme from protoporphyrin-IX: step 1/1. Functionally, catalyzes the ferrous insertion into protoporphyrin IX. The polypeptide is Ferrochelatase (Rhizobium johnstonii (strain DSM 114642 / LMG 32736 / 3841) (Rhizobium leguminosarum bv. viciae)).